We begin with the raw amino-acid sequence, 820 residues long: Trimethylamine-N-oxide reductase (820 aa).

The tat-type signal signal peptide spans 1 to 33 (MAITRRSFLKGVATTSAASVIGPSLLASASANA). Serine 179 lines the Mo-bis(molybdopterin guanine dinucleotide) pocket.

This sequence belongs to the prokaryotic molybdopterin-containing oxidoreductase family. Requires Mo-bis(molybdopterin guanine dinucleotide) as cofactor. Predicted to be exported by the Tat system. The position of the signal peptide cleavage has not been experimentally proven.

The protein resides in the periplasm. The catalysed reaction is trimethylamine + 2 Fe(III)-[cytochrome c] + H2O = trimethylamine N-oxide + 2 Fe(II)-[cytochrome c] + 3 H(+). Reduces trimethylamine-N-oxide (TMAO) into trimethylamine; an anaerobic reaction coupled to energy-yielding reactions. This Vibrio vulnificus (strain CMCP6) protein is Trimethylamine-N-oxide reductase (torA).